Reading from the N-terminus, the 500-residue chain is Aspartyl/glutamyl-tRNA(Asn/Gln) amidotransferase subunit B (500 aa).

Belongs to the GatB/GatE family. GatB subfamily. As to quaternary structure, heterotrimer of A, B and C subunits.

The enzyme catalyses L-glutamyl-tRNA(Gln) + L-glutamine + ATP + H2O = L-glutaminyl-tRNA(Gln) + L-glutamate + ADP + phosphate + H(+). It carries out the reaction L-aspartyl-tRNA(Asn) + L-glutamine + ATP + H2O = L-asparaginyl-tRNA(Asn) + L-glutamate + ADP + phosphate + 2 H(+). Functionally, allows the formation of correctly charged Asn-tRNA(Asn) or Gln-tRNA(Gln) through the transamidation of misacylated Asp-tRNA(Asn) or Glu-tRNA(Gln) in organisms which lack either or both of asparaginyl-tRNA or glutaminyl-tRNA synthetases. The reaction takes place in the presence of glutamine and ATP through an activated phospho-Asp-tRNA(Asn) or phospho-Glu-tRNA(Gln). This Sinorhizobium fredii (strain NBRC 101917 / NGR234) protein is Aspartyl/glutamyl-tRNA(Asn/Gln) amidotransferase subunit B.